The primary structure comprises 70 residues: Large ribosomal subunit protein bL31 (70 aa).

Cys-16, Cys-18, Cys-37, and Cys-40 together coordinate Zn(2+).

Belongs to the bacterial ribosomal protein bL31 family. Type A subfamily. Part of the 50S ribosomal subunit. Requires Zn(2+) as cofactor.

Functionally, binds the 23S rRNA. The sequence is that of Large ribosomal subunit protein bL31 from Shewanella frigidimarina (strain NCIMB 400).